Here is a 271-residue protein sequence, read N- to C-terminus: Acyl-[acyl-carrier-protein]--UDP-N-acetylglucosamine O-acyltransferase (271 aa).

It belongs to the transferase hexapeptide repeat family. LpxA subfamily. In terms of assembly, homotrimer.

Its subcellular location is the cytoplasm. The catalysed reaction is a (3R)-hydroxyacyl-[ACP] + UDP-N-acetyl-alpha-D-glucosamine = a UDP-3-O-[(3R)-3-hydroxyacyl]-N-acetyl-alpha-D-glucosamine + holo-[ACP]. It participates in glycolipid biosynthesis; lipid IV(A) biosynthesis; lipid IV(A) from (3R)-3-hydroxytetradecanoyl-[acyl-carrier-protein] and UDP-N-acetyl-alpha-D-glucosamine: step 1/6. In terms of biological role, involved in the biosynthesis of lipid A, a phosphorylated glycolipid that anchors the lipopolysaccharide to the outer membrane of the cell. This is Acyl-[acyl-carrier-protein]--UDP-N-acetylglucosamine O-acyltransferase from Agrobacterium fabrum (strain C58 / ATCC 33970) (Agrobacterium tumefaciens (strain C58)).